The chain runs to 418 residues: UDP-N-acetylglucosamine 1-carboxyvinyltransferase 2 (418 aa).

Residue 22–23 (KN) coordinates phosphoenolpyruvate. Arg92 is a binding site for UDP-N-acetyl-alpha-D-glucosamine. Cys116 (proton donor) is an active-site residue. A 2-(S-cysteinyl)pyruvic acid O-phosphothioketal modification is found at Cys116. Residues Asp305 and Ile327 each coordinate UDP-N-acetyl-alpha-D-glucosamine.

It belongs to the EPSP synthase family. MurA subfamily.

The protein resides in the cytoplasm. It catalyses the reaction phosphoenolpyruvate + UDP-N-acetyl-alpha-D-glucosamine = UDP-N-acetyl-3-O-(1-carboxyvinyl)-alpha-D-glucosamine + phosphate. The protein operates within cell wall biogenesis; peptidoglycan biosynthesis. Functionally, cell wall formation. Adds enolpyruvyl to UDP-N-acetylglucosamine. This chain is UDP-N-acetylglucosamine 1-carboxyvinyltransferase 2, found in Mesorhizobium japonicum (strain LMG 29417 / CECT 9101 / MAFF 303099) (Mesorhizobium loti (strain MAFF 303099)).